The sequence spans 641 residues: Chaperone protein HtpG (641 aa).

The a; substrate-binding stretch occupies residues 1–348 (MTTATEKQTL…SNDLSLNVSR (348 aa)). The segment at 349–565 (EILQNDKAVE…AYDMGVQMRR (217 aa)) is b. A c region spans residues 566 to 641 (IMEAAGQALP…KLLLELSNAG (76 aa)).

This sequence belongs to the heat shock protein 90 family. As to quaternary structure, homodimer.

The protein localises to the cytoplasm. In terms of biological role, molecular chaperone. Has ATPase activity. The chain is Chaperone protein HtpG from Hahella chejuensis (strain KCTC 2396).